The chain runs to 593 residues: MEPATAPRPDMAPELTPEEEQATKQFLEEINKWTVQYNVSPLSWNVAVKFLMARKFDVLRAIELFHSYRETRRKEGIVKLKPHEEPLRSEILSGKFTILNVRDPTGASIALFTARLHHPHKSVQHVVLQALFYLLDRAVDSFETQRNGLVFIYDMCGSNYANFELDLGKKVLNLLKGAFPARLKKVLIVGAPIWFRVPYSIISLLLKDKVRERIQILKTSEVTQHLPRECLPENLGGYVKIDLATWNFQFLPQVNGHPDPFDEIILFSLPPALDWDSVHVPGPHAMTIQELVDYVNARQKQGIYEEYEDIRRENPVGTFHCSMSPGNLEKNRYGDVPCLDQTRVKLTKRSGHTQTDYINASFMDGYKQKNAYIGTQGPLENTYRDFWLMVWEQKVLVIVMTTRFEEGGRRKCGQYWPLEKDSRIRFGFLTVTNLGVENMNHYKKTTLEIHNTEERQKRQVTHFQFLSWPDYGVPSSAASLIDFLRVVRNQQSLAVSNMGARSKGQCPEPPIVVHCSAGIGRTGTFCSLDICLAQLEELGTLNVFQTVSRMRTQRAFSIQTPEQYYFCYKAILEFAEKEGMVSSGQNLLAVESQ.

An N-acetylmethionine modification is found at Met-1. Residues Met-1 to Gln-21 form a disordered region. Residues Glu-84–Leu-243 enclose the CRAL-TRIO domain. In terms of domain architecture, Tyrosine-protein phosphatase spans Ile-303 to Phe-574. Substrate-binding positions include Asp-470, Cys-515–Arg-521, and Gln-559. The active-site Phosphocysteine intermediate is the Cys-515.

Belongs to the protein-tyrosine phosphatase family. Non-receptor class 3 subfamily.

Its subcellular location is the cytoplasm. The catalysed reaction is O-phospho-L-tyrosyl-[protein] + H2O = L-tyrosyl-[protein] + phosphate. Its function is as follows. Protein-tyrosine phosphatase that could participate in the transfer of hydrophobic ligands or in functions of the Golgi apparatus. The polypeptide is Tyrosine-protein phosphatase non-receptor type 9 (PTPN9) (Homo sapiens (Human)).